The sequence spans 335 residues: Ubiquinone biosynthesis protein COQ4, mitochondrial (335 aa).

The N-terminal 10 residues, 1 to 10, are a transit peptide targeting the mitochondrion; that stretch reads MLRLSLLRST. 4 residues coordinate Zn(2+): H210, D211, H214, and E226.

The protein belongs to the COQ4 family. As to quaternary structure, component of a multi-subunit COQ enzyme complex, composed of at least COQ3, COQ4, COQ5, COQ6, COQ7 and COQ9. Interacts with COQ3. The cofactor is Zn(2+).

The protein localises to the mitochondrion inner membrane. It carries out the reaction 4-hydroxy-3-methoxy-5-(all-trans-hexaprenyl)benzoate + H(+) = 2-methoxy-6-(all-trans-hexaprenyl)phenol + CO2. Its pathway is cofactor biosynthesis; ubiquinone biosynthesis. In terms of biological role, lyase that catalyzes the C1-decarboxylation of 4-hydroxy-3-methoxy-5-(all-trans-hexaprenyl)benzoic acid into 2-methoxy-6-(all-trans-hexaprenyl)phenol during ubiquinone biosynthesis. May play a role in organizing a multi-subunit COQ enzyme complex required for coenzyme Q biosynthesis. Required for steady-state levels of COQ3, COQ4, COQ6, COQ7 and COQ9 polypeptides. The protein is Ubiquinone biosynthesis protein COQ4, mitochondrial of Saccharomyces cerevisiae (strain ATCC 204508 / S288c) (Baker's yeast).